The following is a 78-amino-acid chain: D-alanyl carrier protein (78 aa).

The Carrier domain occupies 1 to 78; it reads MEFKNQVYGI…HIAEQLAEMK (78 aa). The residue at position 36 (S36) is an O-(pantetheine 4'-phosphoryl)serine.

This sequence belongs to the DltC family. Post-translationally, 4'-phosphopantetheine is transferred from CoA to a specific serine of apo-DCP.

It is found in the cytoplasm. Its pathway is cell wall biogenesis; lipoteichoic acid biosynthesis. Its function is as follows. Carrier protein involved in the D-alanylation of lipoteichoic acid (LTA). The loading of thioester-linked D-alanine onto DltC is catalyzed by D-alanine--D-alanyl carrier protein ligase DltA. The DltC-carried D-alanyl group is further transferred to cell membrane phosphatidylglycerol (PG) by forming an ester bond, probably catalyzed by DltD. D-alanylation of LTA plays an important role in modulating the properties of the cell wall in Gram-positive bacteria, influencing the net charge of the cell wall. In Bacillus pumilus (strain SAFR-032), this protein is D-alanyl carrier protein.